A 285-amino-acid polypeptide reads, in one-letter code: Golgi to ER traffic protein 2 (285 aa).

A compositionally biased stretch (basic and acidic residues) spans 1–10 (MSELTEAEKR). The interval 1-71 (MSELTEAEKR…HSATPDIKED (71 aa)) is disordered. Position 2 is an N-acetylserine (Ser2). The Cytoplasmic segment spans residues 2-148 (SELTEAEKRR…LDYHDYLLNR (147 aa)). Positions 11–20 (RLLRERRQKK) are enriched in basic residues. Over residues 24-42 (GGASSRLNKITGQASSHLN) the composition is skewed to polar residues. Ser45 is modified (phosphoserine). Residues 49-60 (APSAAKATPPAS) are compositionally biased toward low complexity. Residues 149-169 (LKAWTILVKWVFFLLPYLYLI) form a helical membrane-spanning segment. Over 170–196 (TRPNSSVWPAYAFTQSAWFAPLRNPSN) the chain is Lumenal. N-linked (GlcNAc...) asparagine glycosylation is found at Asn173 and Asn196. A helical membrane pass occupies residues 197–216 (FTRIFATFEFLSISIYYQLL). Over 217-263 (KNVEHKSKIKNLQDTNKLVKLVSLVPEGVIPVANLKGKLITLLQYWD) the chain is Cytoplasmic. The helical transmembrane segment at 264-284 (LLSMLITDISFVLIVLGLLTY) threads the bilayer. Residue Leu285 is a topological domain, lumenal.

The protein belongs to the GET2 family. As to quaternary structure, component of the Golgi to ER traffic (GET) complex, which is composed of GET1, GET2 and GET3. Within the complex, GET1 and GET2 form a heterotetramer which is stabilized by phosphatidylinositol binding and which binds to the GET3 homodimer.

The protein resides in the endoplasmic reticulum membrane. The protein localises to the golgi apparatus membrane. Its function is as follows. Required for the post-translational delivery of tail-anchored (TA) proteins to the endoplasmic reticulum. Together with GET1, acts as a membrane receptor for soluble GET3, which recognizes and selectively binds the transmembrane domain of TA proteins in the cytosol. The GET complex cooperates with the HDEL receptor ERD2 to mediate the ATP-dependent retrieval of resident ER proteins that contain a C-terminal H-D-E-L retention signal from the Golgi to the ER. Involved in DNA replication and DNA damage response and also in cell wall function. This Saccharomyces cerevisiae (strain YJM789) (Baker's yeast) protein is Golgi to ER traffic protein 2.